Reading from the N-terminus, the 920-residue chain is Isoleucine--tRNA ligase (920 aa).

The 'HIGH' region signature appears at Pro-58–His-68. Glu-569 contributes to the L-isoleucyl-5'-AMP binding site. The 'KMSKS' region motif lies at Lys-610–Ser-614. Position 613 (Lys-613) interacts with ATP. Residues Cys-895, Cys-898, Cys-910, and Cys-913 each contribute to the Zn(2+) site.

Belongs to the class-I aminoacyl-tRNA synthetase family. IleS type 1 subfamily. As to quaternary structure, monomer. Zn(2+) is required as a cofactor.

It is found in the cytoplasm. It carries out the reaction tRNA(Ile) + L-isoleucine + ATP = L-isoleucyl-tRNA(Ile) + AMP + diphosphate. In terms of biological role, catalyzes the attachment of isoleucine to tRNA(Ile). As IleRS can inadvertently accommodate and process structurally similar amino acids such as valine, to avoid such errors it has two additional distinct tRNA(Ile)-dependent editing activities. One activity is designated as 'pretransfer' editing and involves the hydrolysis of activated Val-AMP. The other activity is designated 'posttransfer' editing and involves deacylation of mischarged Val-tRNA(Ile). This Helicobacter pylori (strain G27) protein is Isoleucine--tRNA ligase.